Reading from the N-terminus, the 68-residue chain is Cytotoxic linear peptide IsCT (68 aa).

Positions 1-23 (MKTQFAILLVALVLFQMFAQSDA) are cleaved as a signal peptide. Phenylalanine 36 is modified (phenylalanine amide). The propeptide occupies 40–68 (GLSDLDGLDELFDGEISKADRDFLRELMR).

The protein belongs to the non-disulfide-bridged peptide (NDBP) superfamily. Short antimicrobial peptide (group 4) family. IsCTf is an enzymatic proteolytic cleavage product of IsCT by the proteases present in the venom. Expressed by the venom gland.

The protein localises to the secreted. It localises to the target cell membrane. Its function is as follows. Shows weak hemolytic activity and antibacterial activity against both Gram-positive and Gram-negative bacteria probably by forming pores in the cell membrane. IsCT adopts an amphipathic alpha-helical structure. Functionally, shows neither hemolytic, nor antibacterial activities, probably because it cannot adopt amphipathic alpha-helical structure. This chain is Cytotoxic linear peptide IsCT, found in Opisthacanthus madagascariensis (Scorpion).